The sequence spans 345 residues: Protein CHROMOSOME TRANSMISSION FIDELITY 7 (345 aa).

The CCHH-type zinc finger occupies 96 to 120; sequence RHCAECGAKYAPGDELDEKNHQSFH.

The protein belongs to the acetyltransferase family. ECO subfamily. Post-translationally, autoacetylated. In terms of tissue distribution, expressed in roots, stems, leaves, young seedlings and flower buds. Detected in the embryo, but not in the endosperm.

The protein resides in the nucleus. Its subcellular location is the cytoplasm. In terms of biological role, acetyltransferase required for the establishment of sister chromatid cohesion. Involved in preservation of genome integrity and meiosis. Required for DNA repair and for the regulation of chromosome segregation during mitotic cell division. Knock-down mutants are extremely dwarf. Regulator of sister chromatid cohesion in meiosis which negatively regulates cohesin association with chromatin, acting as an antagonist of WAPL1 and WAPL2. The chain is Protein CHROMOSOME TRANSMISSION FIDELITY 7 from Arabidopsis thaliana (Mouse-ear cress).